The primary structure comprises 205 residues: GTP cyclohydrolase 1 (205 aa).

Cysteine 94, histidine 97, and cysteine 165 together coordinate Zn(2+).

The protein belongs to the GTP cyclohydrolase I family. Toroid-shaped homodecamer, composed of two pentamers of five dimers.

The enzyme catalyses GTP + H2O = 7,8-dihydroneopterin 3'-triphosphate + formate + H(+). Its pathway is cofactor biosynthesis; 7,8-dihydroneopterin triphosphate biosynthesis; 7,8-dihydroneopterin triphosphate from GTP: step 1/1. This Sinorhizobium medicae (strain WSM419) (Ensifer medicae) protein is GTP cyclohydrolase 1.